Reading from the N-terminus, the 482-residue chain is Glutamate-rich WD repeat-containing protein 1 (482 aa).

Disordered regions lie at residues 1–75 (MSSK…WRAG) and 148–180 (QLHK…EDKD). Acidic residues-rich tracts occupy residues 27-63 (NGED…DNDG) and 157-180 (EDSD…EDKD). 5 WD repeats span residues 191–231 (NHNG…KALD), 294–334 (GHTE…PAIT), 337–377 (AHTA…DNSP), 383–423 (YHTG…DTEE), and 446–482 (QGQH…NSEE).

It is found in the nucleus. Its subcellular location is the nucleolus. The polypeptide is Glutamate-rich WD repeat-containing protein 1 (grwd1) (Dictyostelium discoideum (Social amoeba)).